An 869-amino-acid polypeptide reads, in one-letter code: Sodium-dependent phosphate transporter (869 aa).

Residues 1 to 18 are Extracellular-facing; that stretch reads MEAVAELSAPSLAGAPGE. Residues 19–39 traverse the membrane as a helical segment; sequence YTWIVAVAGVTCFLTAFAIGA. Topologically, residues 40–54 are cytoplasmic; sequence NDVANTFSSSVGSRA. A helical membrane pass occupies residues 55 to 75; that stretch reads IPLWAAIGMSAVLETVGATLL. The Extracellular portion of the chain corresponds to 76 to 97; that stretch reads GGAVTDSIRSKIIDFEVFRETP. A helical membrane pass occupies residues 98 to 118; the sequence is SILMTGMLCALVGAGLWLFLA. Residues 119 to 120 lie on the Cytoplasmic side of the membrane; the sequence is NH. A helical membrane pass occupies residues 121–141; sequence LGLPVSTTHSIIGALLGFGLA. The Extracellular portion of the chain corresponds to 142-154; sequence SGNVRAVKWTQVA. A helical transmembrane segment spans residues 155 to 175; the sequence is FIVGSWVAAPLAASAAGATIF. The Cytoplasmic portion of the chain corresponds to 176–196; sequence VCMRRLILRSRQPLRRAKRFL. A helical transmembrane segment spans residues 197-217; it reads WIFIYLITLTFSVFLVFKNFF. Over 218 to 250 the chain is Extracellular; the sequence is ELNVSCDQMVAGGRVEHFEPCRISRWADAHSGT. A helical transmembrane segment spans residues 251–271; the sequence is ALGIAVALSVALTFVISCLVY. The Cytoplasmic segment spans residues 272 to 720; that stretch reads RFAFYRVESY…SGSADSEIGS (449 aa). Disordered stretches follow at residues 286–312, 374–401, and 453–571; these read KRSS…GGLL, AAAA…GSSV, and SAFL…KRER. A compositionally biased stretch (low complexity) spans 457–481; sequence SSPSSSVPPSSPSPSSTPSSPSASP. A compositionally biased stretch (pro residues) spans 482–491; that stretch reads RRPPSRPPVP. Low complexity predominate over residues 492-509; the sequence is RTCSPAPVSPSVPRAFAS. Over residues 556-571 the composition is skewed to basic and acidic residues; it reads PHPERRDEVPAAKRER. Residues 721–741 form a helical membrane-spanning segment; the sequence is PWYILLFGGLSMSLGLALLGY. At 742 to 759 the chain is on the extracellular side; that stretch reads RVIKTVGVKLVKITPARG. A helical transmembrane segment spans residues 760 to 780; it reads FSMELGAAWTVLIFSAIGIPL. The Cytoplasmic portion of the chain corresponds to 781 to 837; sequence STTHCAVGSTVGVGLMEPKHPRRETGDGPVAEGEEPKKRAVQCPVINTASVNWKLFG. Residues 838-858 traverse the membrane as a helical segment; that stretch reads GVFVSWIITIAFSALVTAALF. Over 859-869 the chain is Extracellular; it reads SFAAYSPRMVS.

It belongs to the inorganic phosphate transporter (PiT) (TC 2.A.20) family.

It is found in the cell membrane. The protein localises to the vacuole membrane. It localises to the cytoplasmic vesicle membrane. The enzyme catalyses 2 Na(+)(out) + phosphate(out) = 2 Na(+)(in) + phosphate(in). Functionally, sodium-phosphate symporter which preferentially transports the monovalent form of phosphate with a stoichiometry of two sodium ions per phosphate ion. Plays a role in stabilizing the cytosolic pH and osmoregulation. May be required for optimal virulence of parasites in vivo. This is Sodium-dependent phosphate transporter from Toxoplasma gondii (strain ATCC 50861 / VEG).